A 520-amino-acid chain; its full sequence is Fumarate hydratase, mitochondrial (520 aa).

The transit peptide at 1-39 (MASVAHISTAKAIFRAGGLPCRRLITPTLTGLPLKTHRM) directs the protein to the mitochondrion. Residues 153–155 (SGT), 184–187 (HPND), 194–196 (SSN), and Thr242 contribute to the substrate site. The active-site Proton donor/acceptor is the His243. Ser373 is a catalytic residue. Substrate contacts are provided by residues Ser374 and 379 to 381 (KVN).

This sequence belongs to the class-II fumarase/aspartase family. Fumarase subfamily. As to quaternary structure, homotetramer.

The protein localises to the mitochondrion matrix. Its subcellular location is the cytoplasm. It localises to the nucleus. The enzyme catalyses (S)-malate = fumarate + H2O. It participates in carbohydrate metabolism; tricarboxylic acid cycle; (S)-malate from fumarate: step 1/1. Catalyzes the reversible stereospecific interconversion of fumarate to L-malate. In mitochondrion, catalyzes the hydration of fumarate to L-malate in the tricarboxylic acid (TCA) cycle to facilitate a transition step in the production of energy in the form of NADH. In cytoplasm and nucleus, involved in DNA repair in response to DNA damage: following DNA double-strand breaks (DSBs), translocates from the cytosol to the nucleus and promotes DNA repair by catalyzing the dehydration of L-malate to fumarate. The protein is Fumarate hydratase, mitochondrial (fum1) of Schizosaccharomyces pombe (strain 972 / ATCC 24843) (Fission yeast).